A 936-amino-acid chain; its full sequence is Protocadherin alpha-5 (936 aa).

Residues 1-28 (MVYSRRGSLGSRLLLLWLLLAYWKAGSG) form the signal peptide. Topologically, residues 29-696 (QLHYSIPEEA…GPEAALVDVN (668 aa)) are extracellular. Cadherin domains follow at residues 33–132 (SIPE…PPRF), 156–241 (ASDL…APEF), 242–349 (DKSI…TPEM), 350–454 (AITT…LRAF), 455–564 (AQPQ…APAL), and 580–677 (VPRS…APKA). N264, N448, and N547 each carry an N-linked (GlcNAc...) asparagine glycan. The chain crosses the membrane as a helical span at residues 697-717 (VYLIIAICAVSSLLVLTLLLY). The Cytoplasmic segment spans residues 718–936 (TALRCSAQPT…GNSTTDNSDQ (219 aa)). 3 disordered regions span residues 759 to 793 (SGEA…PDWR), 815 to 875 (RAGP…DKFI), and 887 to 936 (QEPA…NSDQ). PXXP repeat units lie at residues 773–776 (PSLP), 785–788 (PRQP), 818–821 (PGGP), 873–876 (KFII), and 877–890 (PGSP…QEPA). A 5 X 4 AA repeats of P-X-X-P region spans residues 773–890 (PSLPQGPTST…AIISIRQEPA (118 aa)). A compositionally biased stretch (polar residues) spans 774–786 (SLPQGPTSTDNPR). Basic and acidic residues predominate over residues 895–909 (DKSDFITFGKKEETK).

It localises to the cell membrane. Potential calcium-dependent cell-adhesion protein. May be involved in the establishment and maintenance of specific neuronal connections in the brain. The chain is Protocadherin alpha-5 (PCDHA5) from Pan troglodytes (Chimpanzee).